The chain runs to 439 residues: uncharacterized protein (439 aa).

The region spanning 273 to 439 (PIIILLDHSG…EARKIYKSIS (167 aa)) is the VWFA domain.

This is an uncharacterized protein from Methanocaldococcus jannaschii (strain ATCC 43067 / DSM 2661 / JAL-1 / JCM 10045 / NBRC 100440) (Methanococcus jannaschii).